We begin with the raw amino-acid sequence, 553 residues long: Efflux pump mlcE (553 aa).

Positions Met-1 to Ser-19 are enriched in basic and acidic residues. Positions Met-1–Ser-29 are disordered. Asn-21 carries N-linked (GlcNAc...) asparagine glycosylation. A run of 13 helical transmembrane segments spans residues Leu-41–Val-61, Val-77–Gly-96, Leu-101–Leu-121, Ala-136–Ala-156, Val-164–Gly-184, Cys-196–Ile-216, Leu-245–Gly-265, Ser-273–Trp-293, Leu-319–Phe-339, Val-352–Ile-372, Gly-376–Val-396, Ala-440–Phe-460, and Thr-516–Trp-536. Asn-543 carries N-linked (GlcNAc...) asparagine glycosylation.

It belongs to the major facilitator superfamily. TCR/Tet family.

It is found in the membrane. In terms of biological role, efflux pump; part of the gene cluster that mediates the biosynthesis of compactin, also known as mevastatin or ML-236B, and which acts as a potent competitive inhibitor of HMG-CoA reductase. The protein is Efflux pump mlcE of Penicillium citrinum.